The sequence spans 359 residues: 3-dehydroquinate synthase (359 aa).

NAD(+) is bound by residues 69–74, 103–107, 127–128, Lys139, Lys148, and 166–169; these read SGESSK, GVVGD, TT, and TLST. 3 residues coordinate Zn(2+): Glu181, His242, and His259.

It belongs to the sugar phosphate cyclases superfamily. Dehydroquinate synthase family. It depends on NAD(+) as a cofactor. Co(2+) serves as cofactor. The cofactor is Zn(2+).

The protein resides in the cytoplasm. It carries out the reaction 7-phospho-2-dehydro-3-deoxy-D-arabino-heptonate = 3-dehydroquinate + phosphate. The protein operates within metabolic intermediate biosynthesis; chorismate biosynthesis; chorismate from D-erythrose 4-phosphate and phosphoenolpyruvate: step 2/7. In terms of biological role, catalyzes the conversion of 3-deoxy-D-arabino-heptulosonate 7-phosphate (DAHP) to dehydroquinate (DHQ). The chain is 3-dehydroquinate synthase from Oceanobacillus iheyensis (strain DSM 14371 / CIP 107618 / JCM 11309 / KCTC 3954 / HTE831).